A 187-amino-acid chain; its full sequence is MNVTSLSFPYGESIQWFCADNAKNLPSSPLKEWLLAPGSLTQKLKGCCDKFEVKILGEGQCAPLEGEYPKQNAVWVREVLLCLDSVPWVFARTLIPQSLLSTRQADFLGLGTRPLGELLFSQDSFVPGRIEIARFTTDSRLAQLAQSLAQNVEHELWGRRRYFHHDEEEMFVSEMFLPAAVQAMARL.

Positions 77, 115, and 174 each coordinate substrate.

The protein belongs to the UbiC family.

The protein localises to the cytoplasm. It carries out the reaction chorismate = 4-hydroxybenzoate + pyruvate. It functions in the pathway cofactor biosynthesis; ubiquinone biosynthesis. Removes the pyruvyl group from chorismate, with concomitant aromatization of the ring, to provide 4-hydroxybenzoate (4HB) for the ubiquinone pathway. This is Probable chorismate pyruvate-lyase from Shewanella sp. (strain ANA-3).